Here is a 167-residue protein sequence, read N- to C-terminus: 2-C-methyl-D-erythritol 2,4-cyclodiphosphate synthase (167 aa).

A divalent metal cation is bound by residues D9 and H11. 4-CDP-2-C-methyl-D-erythritol 2-phosphate contacts are provided by residues 9–11 and 35–36; these read DVH and HS. An a divalent metal cation-binding site is contributed by H43. Residues 57 to 59, 62 to 66, 133 to 136, F140, and R143 each bind 4-CDP-2-C-methyl-D-erythritol 2-phosphate; these read DIG, FPDTD, and TTTE.

It belongs to the IspF family. As to quaternary structure, homotrimer. A divalent metal cation is required as a cofactor.

It catalyses the reaction 4-CDP-2-C-methyl-D-erythritol 2-phosphate = 2-C-methyl-D-erythritol 2,4-cyclic diphosphate + CMP. Its pathway is isoprenoid biosynthesis; isopentenyl diphosphate biosynthesis via DXP pathway; isopentenyl diphosphate from 1-deoxy-D-xylulose 5-phosphate: step 4/6. Its function is as follows. Involved in the biosynthesis of isopentenyl diphosphate (IPP) and dimethylallyl diphosphate (DMAPP), two major building blocks of isoprenoid compounds. Catalyzes the conversion of 4-diphosphocytidyl-2-C-methyl-D-erythritol 2-phosphate (CDP-ME2P) to 2-C-methyl-D-erythritol 2,4-cyclodiphosphate (ME-CPP) with a corresponding release of cytidine 5-monophosphate (CMP). This is 2-C-methyl-D-erythritol 2,4-cyclodiphosphate synthase from Glaesserella parasuis serovar 5 (strain SH0165) (Haemophilus parasuis).